Consider the following 340-residue polypeptide: Anthranilate phosphoribosyltransferase (340 aa).

5-phospho-alpha-D-ribose 1-diphosphate contacts are provided by residues glycine 78, 81–82 (GD), threonine 86, 88–91 (NIST), 106–114 (KHGNRSVSS), and serine 118. Glycine 78 serves as a coordination point for anthranilate. A Mg(2+)-binding site is contributed by serine 90. Residue asparagine 109 participates in anthranilate binding. Residue arginine 164 participates in anthranilate binding. Residues aspartate 223 and glutamate 224 each contribute to the Mg(2+) site.

This sequence belongs to the anthranilate phosphoribosyltransferase family. In terms of assembly, homodimer. It depends on Mg(2+) as a cofactor.

The catalysed reaction is N-(5-phospho-beta-D-ribosyl)anthranilate + diphosphate = 5-phospho-alpha-D-ribose 1-diphosphate + anthranilate. It participates in amino-acid biosynthesis; L-tryptophan biosynthesis; L-tryptophan from chorismate: step 2/5. Catalyzes the transfer of the phosphoribosyl group of 5-phosphorylribose-1-pyrophosphate (PRPP) to anthranilate to yield N-(5'-phosphoribosyl)-anthranilate (PRA). The sequence is that of Anthranilate phosphoribosyltransferase from Bacillus pumilus (Bacillus mesentericus).